The chain runs to 389 residues: Na(+)/H(+) antiporter NhaA (389 aa).

The next 11 membrane-spanning stretches (helical) occupy residues 17 to 37 (ILLLIAVAFAMLMANSPLAGF), 59 to 79 (LLLWINDGLMALFFLLIGLEV), 95 to 115 (SLPTFAAIGGMLVPAGIYLLF), 124 to 144 (AGWAIPAATDIAFALGIMALL), 154 to 174 (VFLLALAIIDDLGVIVIIALF), 177 to 197 (SDLSTVSLIIASIAIVGLVAL), 213 to 233 (LILWVAVLKSGVHATLAGVII), 261 to 281 (FLILPVFAFANAGVALGNMSL), 292 to 312 (IALGLMLGKPIGVMLFSFVAV), 328 to 348 (IAPVAAMCGIGFTMSMFIASL), and 363 to 383 (LGTLMGSIFAALIGYFWLSKV).

This sequence belongs to the NhaA Na(+)/H(+) (TC 2.A.33) antiporter family.

Its subcellular location is the cell inner membrane. The enzyme catalyses Na(+)(in) + 2 H(+)(out) = Na(+)(out) + 2 H(+)(in). In terms of biological role, na(+)/H(+) antiporter that extrudes sodium in exchange for external protons. This chain is Na(+)/H(+) antiporter NhaA, found in Shewanella oneidensis (strain ATCC 700550 / JCM 31522 / CIP 106686 / LMG 19005 / NCIMB 14063 / MR-1).